An 88-amino-acid polypeptide reads, in one-letter code: UPF0367 protein Synpcc7942_1638 (88 aa).

It belongs to the UPF0367 family.

In Synechococcus elongatus (strain ATCC 33912 / PCC 7942 / FACHB-805) (Anacystis nidulans R2), this protein is UPF0367 protein Synpcc7942_1638.